Here is a 2114-residue protein sequence, read N- to C-terminus: Protein CELLULOSE SYNTHASE INTERACTIVE 2 (2114 aa).

ARM repeat units follow at residues 2–42, 46–87, 89–128, 135–177, 180–219, 222–262, 265–305, 354–394, 396–435, 479–519, 522–561, 563–595, 601–640, 643–682, 708–750, 774–816, 825–865, 870–910, 914–953, 994–1033, 1044–1083, 1087–1128, 1141–1182, 1185–1225, 1227–1264, 1265–1304, 1312–1353, 1355–1394, 1396–1435, 1454–1494, 1496–1525, 1526–1564, 1566–1605, 1606–1648, 1650–1689, 1690–1730, 1732–1771, 1772–1813, 1816–1855, 1857–1898, 1901–1940, and 1949–1993; these read TSEM…LLGL, KKEC…VLCK, KNVR…EVSL, NVGT…NLCG, DGFW…RLIR, TSSI…AITS, EEAI…SYGT, GDTR…SLFG, VDLS…NLCK, EESR…NLCC, EEIR…KLIK, ADPS…HVLA, EFVT…DLFS, KDLC…SLSN, AKTN…RVLR, SDVF…LLAK, HNPF…RFCK, LLGR…CAAK, TLWA…IQRP, PSNR…KWIA, PKVV…ALVR, DKTI…LVQN, ERVR…RIAD, DLSK…SLFR, PEIT…LCEL, FSSE…ALVK, RPDI…FLFT, EGLR…RLLD, KRFV…KMAK, ISQL…MVQP, LLIL…KPMV, LESL…SLLE, QRFQ…RSSV, TWPK…NILR, NPEH…ENQD, SSSV…RNPK, RETK…DISQ, HEGL…NFAM, RTSR…SLFS, HTLQ…TILT, PKLR…TLRQ, and TARS…CLPG. The 114-residue stretch at 1974-2087 folds into the C2 domain; that stretch reads SPAPSSFHER…LSEGSYSGIF (114 aa).

As to quaternary structure, associates with cellulase synthase (CESA) complexes. Binds to cortical microtubules.

It is found in the cell membrane. The protein localises to the cytoplasm. It localises to the cytoskeleton. In terms of biological role, regulator of the microtubular cytoskeleton. Microtubule-associated protein involved in the association of cellulase synthase (CESA) complexes (CSCs) and cortical microtubules. Promotes dynamics of CSCs in the plasma membrane. Regulates primary cell wall biosynthesis and cellulose microfibrils organization. The polypeptide is Protein CELLULOSE SYNTHASE INTERACTIVE 2 (Arabidopsis thaliana (Mouse-ear cress)).